We begin with the raw amino-acid sequence, 83 residues long: UPF0297 protein DSY2420 (83 aa).

The protein belongs to the UPF0297 family.

The chain is UPF0297 protein DSY2420 from Desulfitobacterium hafniense (strain Y51).